The sequence spans 215 residues: Transmembrane emp24 domain-containing protein 11 (215 aa).

The first 17 residues, 1-17 (MQIQTILLCFSFSFSAA), serve as a signal peptide directing secretion. Residues 18-167 (FYFHAGEREE…ILKEQDYQRD (150 aa)) are Lumenal-facing. The GOLD domain occupies 27-125 (EKCIIEDIPS…KLRIHLDIRV (99 aa)). A glycan (N-linked (GlcNAc...) asparagine) is linked at N105. Positions 136-171 (QAKDKVNEVTFKLQHLIEQVEQILKEQDYQRDREEN) form a coiled coil. Residues 168–185 (REENFRITSEDTNRNVLW) traverse the membrane as a helical segment. Over 186-215 (WAFAQILIFISVGIFQMKHLKDFFIAKKLV) the chain is Cytoplasmic. Positions 208 to 209 (FF) match the COPII vesicle coat-binding motif. The short motif at 208 to 215 (FFIAKKLV) is the COPI vesicle coat-binding element.

This sequence belongs to the EMP24/GP25L family.

The protein localises to the endoplasmic reticulum membrane. Functionally, part of a complex whose function is to bind Ca(2+) to the ER membrane and thereby regulate the retention of ER resident proteins. The protein is Transmembrane emp24 domain-containing protein 11 (Tmed11) of Mus musculus (Mouse).